The primary structure comprises 85 residues: uncharacterized protein (85 aa).

Positions 17 to 53 (KKRYEMLVQELLKEDDEEREKILAEELELLLDFLKKA) form a coiled coil.

This is an uncharacterized protein from Archaeoglobus fulgidus (strain ATCC 49558 / DSM 4304 / JCM 9628 / NBRC 100126 / VC-16).